We begin with the raw amino-acid sequence, 306 residues long: Pyridoxal 5'-phosphate synthase subunit PdxS (306 aa).

A D-ribose 5-phosphate-binding site is contributed by D36. The Schiff-base intermediate with D-ribose 5-phosphate role is filled by K93. G165 lines the D-ribose 5-phosphate pocket. R177 contributes to the D-glyceraldehyde 3-phosphate binding site. Residues G226 and 247-248 (GS) contribute to the D-ribose 5-phosphate site.

The protein belongs to the PdxS/SNZ family. In the presence of PdxT, forms a dodecamer of heterodimers.

It carries out the reaction aldehydo-D-ribose 5-phosphate + D-glyceraldehyde 3-phosphate + L-glutamine = pyridoxal 5'-phosphate + L-glutamate + phosphate + 3 H2O + H(+). The protein operates within cofactor biosynthesis; pyridoxal 5'-phosphate biosynthesis. Its function is as follows. Catalyzes the formation of pyridoxal 5'-phosphate from ribose 5-phosphate (RBP), glyceraldehyde 3-phosphate (G3P) and ammonia. The ammonia is provided by the PdxT subunit. Can also use ribulose 5-phosphate and dihydroxyacetone phosphate as substrates, resulting from enzyme-catalyzed isomerization of RBP and G3P, respectively. The sequence is that of Pyridoxal 5'-phosphate synthase subunit PdxS from Salinispora arenicola (strain CNS-205).